Consider the following 314-residue polypeptide: tRNA pseudouridine synthase B (314 aa).

Histidine 43 contributes to the substrate binding site. Aspartate 48 functions as the Nucleophile in the catalytic mechanism. 3 residues coordinate substrate: tyrosine 76, tyrosine 179, and leucine 200.

The protein belongs to the pseudouridine synthase TruB family. Type 1 subfamily.

The enzyme catalyses uridine(55) in tRNA = pseudouridine(55) in tRNA. In terms of biological role, responsible for synthesis of pseudouridine from uracil-55 in the psi GC loop of transfer RNAs. In Salmonella paratyphi B (strain ATCC BAA-1250 / SPB7), this protein is tRNA pseudouridine synthase B.